A 379-amino-acid chain; its full sequence is Cobalt-precorrin-5B C(1)-methyltransferase (379 aa).

Belongs to the CbiD family.

It carries out the reaction Co-precorrin-5B + S-adenosyl-L-methionine = Co-precorrin-6A + S-adenosyl-L-homocysteine. Its pathway is cofactor biosynthesis; adenosylcobalamin biosynthesis; cob(II)yrinate a,c-diamide from sirohydrochlorin (anaerobic route): step 6/10. In terms of biological role, catalyzes the methylation of C-1 in cobalt-precorrin-5B to form cobalt-precorrin-6A. The protein is Cobalt-precorrin-5B C(1)-methyltransferase of Salmonella typhimurium (strain LT2 / SGSC1412 / ATCC 700720).